Here is a 156-residue protein sequence, read N- to C-terminus: Small ribosomal subunit protein uS7 (156 aa).

It belongs to the universal ribosomal protein uS7 family. As to quaternary structure, part of the 30S ribosomal subunit. Contacts proteins S9 and S11.

In terms of biological role, one of the primary rRNA binding proteins, it binds directly to 16S rRNA where it nucleates assembly of the head domain of the 30S subunit. Is located at the subunit interface close to the decoding center, probably blocks exit of the E-site tRNA. This chain is Small ribosomal subunit protein uS7, found in Gemmatimonas aurantiaca (strain DSM 14586 / JCM 11422 / NBRC 100505 / T-27).